We begin with the raw amino-acid sequence, 368 residues long: Putative J domain-containing protein R445 (368 aa).

In terms of domain architecture, J spans 13–83; sequence DLYKILGLTN…KQRNEYNQRL (71 aa).

The sequence is that of Putative J domain-containing protein R445 from Acanthamoeba polyphaga mimivirus (APMV).